Here is a 199-residue protein sequence, read N- to C-terminus: Holliday junction resolvase RecU (199 aa).

The Mg(2+) site is built by Thr-82, Asp-84, Glu-97, and Gln-116.

This sequence belongs to the RecU family. Mg(2+) serves as cofactor.

It is found in the cytoplasm. The catalysed reaction is Endonucleolytic cleavage at a junction such as a reciprocal single-stranded crossover between two homologous DNA duplexes (Holliday junction).. In terms of biological role, endonuclease that resolves Holliday junction intermediates in genetic recombination. Cleaves mobile four-strand junctions by introducing symmetrical nicks in paired strands. Promotes annealing of linear ssDNA with homologous dsDNA. Required for DNA repair, homologous recombination and chromosome segregation. In Streptococcus pyogenes serotype M1, this protein is Holliday junction resolvase RecU.